Reading from the N-terminus, the 210-residue chain is MRMRSDPHETTVPGERPAASYLDGQLLVAMPGMTDERFARSVIYLCAHSAEGAMGIIVNKPAADLNMPDLLVQLDIIRQDDAIRLPIRVGHMPVLMGGPVESSRGFVLHSPDFHIDQSTLLIDDGICLTATVEILRAIAAGTGPRDAVLALGYAGWQAGQLESEIQANGWLHCPADPDLIFNTALDAKYDRALRAIGIEPAMLSTSAGHA.

This sequence belongs to the UPF0301 (AlgH) family.

This is UPF0301 protein Mnod_6933 from Methylobacterium nodulans (strain LMG 21967 / CNCM I-2342 / ORS 2060).